The chain runs to 639 residues: Collagen alpha-1(XII) chain (639 aa).

The VWFA domain maps to 1–114 (CRKSLLQAVA…DSLSKIVDDL (114 aa)). 6 Fibronectin type-III domains span residues 130–219 (APSN…LPVP), 220–310 (IVSL…LPLP), 311–401 (RPQD…VPAP), 402–490 (TNLR…SPKS), 491–585 (GPRN…TVRN), and 586–639 (LRVY…LRNL). A disordered region spans residues 473–496 (DESESDDLTGSERTSPKSGPRNLQ).

Belongs to the fibril-associated collagens with interrupted helices (FACIT) family. As to quaternary structure, trimer of identical chains each containing 190 kDa of non-triple-helical sequences. The triple-helical tail is stabilized by disulfide bonds at each end. In terms of processing, prolines at the third position of the tripeptide repeating unit (G-X-Y) are hydroxylated in some or all of the chains. Post-translationally, O-glycosylated; glycosaminoglycan of chondroitin-sulfate type.

The protein localises to the secreted. It is found in the extracellular space. It localises to the extracellular matrix. Functionally, type XII collagen interacts with type I collagen-containing fibrils, the COL1 domain could be associated with the surface of the fibrils, and the COL2 and NC3 domains may be localized in the perifibrillar matrix. In Oryctolagus cuniculus (Rabbit), this protein is Collagen alpha-1(XII) chain (COL12A1).